Consider the following 131-residue polypeptide: Large ribosomal subunit protein bL12 (131 aa).

This sequence belongs to the bacterial ribosomal protein bL12 family. In terms of assembly, homodimer. Part of the ribosomal stalk of the 50S ribosomal subunit. Forms a multimeric L10(L12)X complex, where L10 forms an elongated spine to which 2 to 4 L12 dimers bind in a sequential fashion. Binds GTP-bound translation factors.

Forms part of the ribosomal stalk which helps the ribosome interact with GTP-bound translation factors. Is thus essential for accurate translation. The sequence is that of Large ribosomal subunit protein bL12 from Prochlorococcus marinus (strain MIT 9215).